The following is a 299-amino-acid chain: Protein NSG2 (299 aa).

The Cytoplasmic segment spans residues 1 to 108 (MANRGEPDPK…PSRTRQTRQN (108 aa)). S90 carries the post-translational modification Phosphoserine. Residues 109 to 129 (ILHYLQAVLILSLSGFAYHEL) form a helical membrane-spanning segment. Topologically, residues 130 to 161 (SRNLHDNHLLHPDFASRPLLLGVKLCNWLSNG) are lumenal. The helical transmembrane segment at 162 to 182 (VLPNWLGYGVEGLLFGSVVPI) threads the bilayer. Over 183–237 (LDNIFQTEVVKSSVHHDSLTSVIRSINAMLGVTFGIRKIQWNSSLQAAGAWGLLN) the chain is Cytoplasmic. The chain crosses the membrane as a helical span at residues 238–258 (IILWLFFDGSISMLMSCICIG). Residues 259–268 (VGCCISCYKD) are Lumenal-facing. A helical membrane pass occupies residues 269–289 (IIDGSQFLYFMDFYFLGSLMF). The Cytoplasmic portion of the chain corresponds to 290 to 299 (GKLGRYLYSH).

It belongs to the INSIG family.

It is found in the endoplasmic reticulum membrane. Functionally, stabilizes the HMG-CoA reductase HMG2 by preventing its HRD1-dependent degradation. Binds directly to the sterol-sensing domain (SSD)-containing transmembrane region of HMG2, promoting its folding to protect it from degradation. This Saccharomyces cerevisiae (strain ATCC 204508 / S288c) (Baker's yeast) protein is Protein NSG2 (NSG2).